Here is a 149-residue protein sequence, read N- to C-terminus: Secreted RxLR effector protein 3 (149 aa).

A signal peptide spans 1 to 23; the sequence is MRASTILFVLGAAILAVIGVTTA. The RxLR-dEER motif lies at 38–53; sequence RLLRSGSMEQEPDEER.

It belongs to the RxLR effector family.

Its subcellular location is the secreted. It is found in the host nucleus. The protein resides in the host cytoplasm. Functionally, secreted effector that completely suppresses the host cell death induced by cell death-inducing proteins. This Plasmopara viticola (Downy mildew of grapevine) protein is Secreted RxLR effector protein 3.